We begin with the raw amino-acid sequence, 23 residues long: PAWLVDCPCVGDDVNRLLARGEK.

A propeptide is located at residue Pro1. The cyclopeptide (Ala-Pro) cross-link spans Ala2 to Pro8. The 2'-cysteinyl-6'-hydroxytryptophan sulfoxide (Trp-Cys) cross-link spans Trp3 to Cys7. Residues Cys9–Lys23 constitute a propeptide that is removed on maturation.

The protein belongs to the MSDIN fungal toxin family. In terms of processing, processed by the macrocyclase-peptidase enzyme POPB to yield a toxic cyclic heptapeptide. POPB first removes 10 residues from the N-terminus. Conformational trapping of the remaining peptide forces the enzyme to release this intermediate rather than proceed to macrocyclization. The enzyme rebinds the remaining peptide in a different conformation and catalyzes macrocyclization of the N-terminal 7 residues.

Major toxin that belongs to the bicyclic heptapeptides called phallotoxins. Although structurally related to amatoxins, phallotoxins have a different mode of action, which is the stabilization of F-actin. Phallotoxins are poisonous when administered parenterally, but not orally because of poor absorption. This chain is Phallacidin proprotein, found in Amanita fuliginea (East Asian brown death cap).